Here is a 384-residue protein sequence, read N- to C-terminus: Probable UDP-galactopyranose mutase (384 aa).

Positions 1 to 19 (MNNKNIMIVGAGFSGVVIA) are cleaved as a signal peptide. FAD-binding positions include Ser14, 33 to 34 (DR), Asn41, and 60 to 61 (HI). UDP-alpha-D-galactose contacts are provided by Asn84, Phe151, Thr156, Trp160, and Tyr185. Position 219 (Phe219) interacts with FAD. Asn270, Arg280, and Tyr314 together coordinate UDP-alpha-D-galactose. Arg343 contributes to the FAD binding site. A UDP-alpha-D-galactose-binding site is contributed by Tyr349. Residue 350–355 (LDMDVT) participates in FAD binding.

This sequence belongs to the UDP-galactopyranose/dTDP-fucopyranose mutase family. In terms of assembly, homodimer. It depends on FAD as a cofactor.

It catalyses the reaction UDP-alpha-D-galactose = UDP-alpha-D-galactofuranose. Its pathway is bacterial outer membrane biogenesis; LPS O-antigen biosynthesis. Functionally, catalyzes the interconversion through a 2-keto intermediate of uridine diphosphogalactopyranose (UDP-GalP) into uridine diphosphogalactofuranose (UDP-GalF). This is Probable UDP-galactopyranose mutase (rfbD) from Klebsiella pneumoniae.